Here is a 223-residue protein sequence, read N- to C-terminus: Probable transaldolase (223 aa).

Residue Lys91 is the Schiff-base intermediate with substrate of the active site.

The protein belongs to the transaldolase family. Type 3B subfamily.

The protein resides in the cytoplasm. It catalyses the reaction D-sedoheptulose 7-phosphate + D-glyceraldehyde 3-phosphate = D-erythrose 4-phosphate + beta-D-fructose 6-phosphate. It functions in the pathway carbohydrate degradation; pentose phosphate pathway; D-glyceraldehyde 3-phosphate and beta-D-fructose 6-phosphate from D-ribose 5-phosphate and D-xylulose 5-phosphate (non-oxidative stage): step 2/3. Its function is as follows. Transaldolase is important for the balance of metabolites in the pentose-phosphate pathway. In Prosthecochloris aestuarii (strain DSM 271 / SK 413), this protein is Probable transaldolase.